The sequence spans 492 residues: Glycogen synthase 1 (492 aa).

Position 15 (Lys15) interacts with ADP-alpha-D-glucose.

Belongs to the glycosyltransferase 1 family. Bacterial/plant glycogen synthase subfamily.

The catalysed reaction is [(1-&gt;4)-alpha-D-glucosyl](n) + ADP-alpha-D-glucose = [(1-&gt;4)-alpha-D-glucosyl](n+1) + ADP + H(+). Its pathway is glycan biosynthesis; glycogen biosynthesis. In terms of biological role, synthesizes alpha-1,4-glucan chains using ADP-glucose. This is Glycogen synthase 1 from Trichormus variabilis (strain ATCC 29413 / PCC 7937) (Anabaena variabilis).